The sequence spans 723 residues: Catalase-peroxidase (723 aa).

Positions 98–226 form a cross-link, tryptophyl-tyrosyl-methioninium (Trp-Tyr) (with M-252); that stretch reads WHSAGSYRVG…LAAVMMGLIY (129 aa). Histidine 99 (proton acceptor) is an active-site residue. The tryptophyl-tyrosyl-methioninium (Tyr-Met) (with W-98) cross-link spans 226–252; the sequence is YVNPEGVDGNPDPLKTAKDMRVTFARM. Histidine 267 is a binding site for heme b.

Belongs to the peroxidase family. Peroxidase/catalase subfamily. Homodimer or homotetramer. Requires heme b as cofactor. Post-translationally, formation of the three residue Trp-Tyr-Met cross-link is important for the catalase, but not the peroxidase activity of the enzyme.

It carries out the reaction H2O2 + AH2 = A + 2 H2O. The catalysed reaction is 2 H2O2 = O2 + 2 H2O. Its function is as follows. Bifunctional enzyme with both catalase and broad-spectrum peroxidase activity. The protein is Catalase-peroxidase of Vibrio vulnificus (strain CMCP6).